Here is a 701-residue protein sequence, read N- to C-terminus: Glycine--tRNA ligase beta subunit (701 aa).

The protein belongs to the class-II aminoacyl-tRNA synthetase family. In terms of assembly, tetramer of two alpha and two beta subunits.

It localises to the cytoplasm. It carries out the reaction tRNA(Gly) + glycine + ATP = glycyl-tRNA(Gly) + AMP + diphosphate. This is Glycine--tRNA ligase beta subunit from Helicobacter pylori (strain HPAG1).